The primary structure comprises 409 residues: Ingression protein 1 (409 aa).

The 114-residue stretch at 1-114 folds into the C2 domain; the sequence is MSEEVWNGNQ…DPKEGYCTWY (114 aa). Residues 300-409 are disordered; the sequence is LSYDEDDDDD…TRKRPPPRLS (110 aa). Acidic residues predominate over residues 302–313; that stretch reads YDEDDDDDDEND. A compositionally biased stretch (polar residues) spans 315 to 328; the sequence is FYSSSHRVSHNYNQ. The segment covering 360–377 has biased composition (low complexity); the sequence is LDSSSPNSHPHPSGLNSP. Residues 384 to 399 are compositionally biased toward polar residues; it reads TTSNSNFNSRKNSMSP. S392 carries the post-translational modification Phosphoserine. Basic residues predominate over residues 400–409; it reads TRKRPPPRLS.

It belongs to the INN1/fic1 family. Interacts with CYK2, CYK3 and IQG1.

The protein resides in the bud neck. Functionally, required for the ingression of the plasma membrane into the bud neck at the end of cytokinesis, leading to the separation of the mother and daughter cells. Stimulates the synthesis of the primary septum (PS) by CHS2. This chain is Ingression protein 1 (INN1), found in Saccharomyces cerevisiae (strain ATCC 204508 / S288c) (Baker's yeast).